Consider the following 596-residue polypeptide: MITKRNIPCKKNWKYKKKSISLTLITICYMFLFLTSCKPGKQNSINLLLLLLNTLDNKNVNEKIEDSTNTDPSSNVNEEDENSINANANDNAPSDSDSSNPRSPDKNPVNPTSPNSSSADIGIKILSHSIFMAPTNLSSWGDLGQEERAQRIASSSYIKNQDIIVFEGLSHNNAEKILLEKIRSEYPYQTNVVGRTKKGWNATLGAYTTSPMANGGVIIVSKWPIEEKVQYIFNNSNCGQDQYYNKGFAYVKINKDGKKFHVIGTQLQAREPDCFNSGETIRKLQLNDIKSFIDSKDIPKDETVLITGDLNIIKGSNEYFDMISKLNVNEPRYVGVPFTLDTKTNALAAYYYEKEKPIYLDYILVSKLHAQPPVWQNLAYDPISNTTWKRSDGYTSYEFSDRYPVYGFIYADSSTPTKSGHKRKYDQVSFQSTFNRKFIQADHNKKDGWLKADTRIKTDFTKFNLLQENVSESNPSCMNSGSVRIESSYYLNYYWNWFIGAASGDYGYYTKFNNGSDSLGIKNLDNGCLKDGSRVAFYDWDTIGGGYYYLTVWDKGSWKEHLFLWVQSFLSSREIFYLHLDSNPPKDWSKDLIYHH.

The signal sequence occupies residues 1 to 36 (MITKRNIPCKKNWKYKKKSISLTLITICYMFLFLTS). Residues 63-118 (KIEDSTNTDPSSNVNEEDENSINANANDNAPSDSDSSNPRSPDKNPVNPTSPNSSS) are disordered. Polar residues predominate over residues 67 to 76 (STNTDPSSNV). A compositionally biased stretch (low complexity) spans 83–118 (SINANANDNAPSDSDSSNPRSPDKNPVNPTSPNSSS).

It is found in the secreted. The enzyme catalyses a sphingomyelin + H2O = phosphocholine + an N-acylsphing-4-enine + H(+). The protein is Sphingomyelinase C 1 (sph1) of Leptospira interrogans serogroup Icterohaemorrhagiae serovar copenhageni (strain Fiocruz L1-130).